The following is a 191-amino-acid chain: RNA polymerase sigma factor CnrH (191 aa).

Positions 49–62 (DVVQDTFVAAWHAL) match the Polymerase core binding motif. A DNA-binding region (H-T-H motif) is located at residues 156–175 (QPEAAAVLGLSVKAVEGRIG).

The protein belongs to the sigma-70 factor family. ECF subfamily.

Its function is as follows. Sigma factors are initiation factors that promote the attachment of RNA polymerase to specific initiation sites and are then released. This sigma factor regulates the genes for a membrane-located efflux system that confers resistance to nickel and cobalt. In terms of biological role, cnrH alone is able to activate CNR expression, while both CnrY and CrnX are needed for nickel induction of cnrH. Binds DNA in an RNA polymerase-dependent fashion. CnrH may be controlled by a CnrYX transmembrane anti-sigma factor complex which binds CnrH in the absence of Ni(2+). If Ni(2+) appears in the periplasm, it may be bound by CnrR (CnrX); the signal then would be transmitted by CnrY into the cytoplasm and CnrH would be released. The protein is RNA polymerase sigma factor CnrH (cnrH) of Cupriavidus metallidurans (strain ATCC 43123 / DSM 2839 / NBRC 102507 / CH34) (Ralstonia metallidurans).